Consider the following 431-residue polypeptide: Gamma-glutamyl phosphate reductase (431 aa).

The protein belongs to the gamma-glutamyl phosphate reductase family.

It is found in the cytoplasm. It carries out the reaction L-glutamate 5-semialdehyde + phosphate + NADP(+) = L-glutamyl 5-phosphate + NADPH + H(+). The protein operates within amino-acid biosynthesis; L-proline biosynthesis; L-glutamate 5-semialdehyde from L-glutamate: step 2/2. Catalyzes the NADPH-dependent reduction of L-glutamate 5-phosphate into L-glutamate 5-semialdehyde and phosphate. The product spontaneously undergoes cyclization to form 1-pyrroline-5-carboxylate. This is Gamma-glutamyl phosphate reductase from Methylobacterium nodulans (strain LMG 21967 / CNCM I-2342 / ORS 2060).